Here is a 293-residue protein sequence, read N- to C-terminus: Cell division protein FtsQ (293 aa).

At 1–29 the chain is on the cytoplasmic side; sequence MSQVRSKSQQGKRQAKPQEVVPATILTEQ. The helical transmembrane segment at 30–52 threads the bilayer; the sequence is LSTYAFGTVTAGAVMVAVAAWMG. The Periplasmic portion of the chain corresponds to 53 to 293; sequence GSLASIDERI…SQIDDKSGGA (241 aa). In terms of domain architecture, POTRA spans 75–144; the sequence is FTVTKISIEG…NDIWILAENR (70 aa).

It belongs to the FtsQ/DivIB family. FtsQ subfamily.

The protein localises to the cell inner membrane. In terms of biological role, essential cell division protein. The sequence is that of Cell division protein FtsQ from Hirschia baltica (strain ATCC 49814 / DSM 5838 / IFAM 1418).